The sequence spans 78 residues: MANIKSNLKRNKQNRARHTVVHSQTSAVKTQIKKTQASKSQKDLSLAYKKIDSALAKGIIKQNKADRLKSRLALNVAR.

The tract at residues methionine 1–lysine 34 is disordered. A compositionally biased stretch (basic residues) spans asparagine 7–valine 20. Polar residues predominate over residues valine 21–lysine 34.

Belongs to the bacterial ribosomal protein bS20 family.

Its function is as follows. Binds directly to 16S ribosomal RNA. This Malacoplasma penetrans (strain HF-2) (Mycoplasma penetrans) protein is Small ribosomal subunit protein bS20.